The sequence spans 169 residues: Peptide methionine sulfoxide reductase MsrA (169 aa).

The active site involves cysteine 10.

It belongs to the MsrA Met sulfoxide reductase family.

It carries out the reaction L-methionyl-[protein] + [thioredoxin]-disulfide + H2O = L-methionyl-(S)-S-oxide-[protein] + [thioredoxin]-dithiol. The catalysed reaction is [thioredoxin]-disulfide + L-methionine + H2O = L-methionine (S)-S-oxide + [thioredoxin]-dithiol. Its function is as follows. Has an important function as a repair enzyme for proteins that have been inactivated by oxidation. Catalyzes the reversible oxidation-reduction of methionine sulfoxide in proteins to methionine. The chain is Peptide methionine sulfoxide reductase MsrA from Streptococcus pyogenes serotype M3 (strain ATCC BAA-595 / MGAS315).